Consider the following 212-residue polypeptide: Large ribosomal subunit protein uL1 (212 aa).

This sequence belongs to the universal ribosomal protein uL1 family. Part of the 50S ribosomal subunit.

Functionally, binds directly to 23S rRNA. Probably involved in E site tRNA release. Its function is as follows. Protein L1 is also a translational repressor protein, it controls the translation of its operon by binding to its mRNA. In Halobacterium salinarum (strain ATCC 29341 / DSM 671 / R1), this protein is Large ribosomal subunit protein uL1.